The sequence spans 482 residues: MALQIYNTLTRRKEPFVPLEAGTVKMYVCGVTVYDYCHLGHGRTYVVWDTVRRYLISRGYAVTYVQNFTDVDDKILRRAQQEGTTMEAVAEKYIAAYFEDMDRLNVLRADSYPRATQTMPEIGALIDRLTSIGYAYPAAGDVYYSVRRFAEYGKLSGKRLAELEAGASERLQDEELARKKDPFDFALWKGAKPGEPAWDSPWGAGRPGWHIECSAMVRKSLGETIDIHAGGEDLQFPHHENEIAQSEAVTGKPLARYWMHNAFLNVVNSSGAEEKMSKSLGNFKTLRDLFEVFPPMALRLFLLKTSYRNPIAFSAEAFKGSEQNWRELEEVLQLAGWIAGQGRPATDDIESEPWVRRFNEAMDDDFNTAAALAEVIALGKQLAGRYHAAIHGTPLADPARFAREWRTFALLCDILGLKAAEPEARQSALPEAEIEAQIALRRQAREERNWAEADRIRKQLLDQGIVLIDHKEKPTTWRHADP.

Position 29 (cysteine 29) interacts with Zn(2+). The short motif at 31 to 41 is the 'HIGH' region element; that stretch reads VTVYDYCHLGH. Zn(2+) is bound by residues cysteine 213, histidine 238, and glutamate 242. A 'KMSKS' region motif is present at residues 275–279; the sequence is KMSKS. An ATP-binding site is contributed by lysine 278.

It belongs to the class-I aminoacyl-tRNA synthetase family. In terms of assembly, monomer. Requires Zn(2+) as cofactor.

The protein localises to the cytoplasm. The catalysed reaction is tRNA(Cys) + L-cysteine + ATP = L-cysteinyl-tRNA(Cys) + AMP + diphosphate. The protein is Cysteine--tRNA ligase of Gloeobacter violaceus (strain ATCC 29082 / PCC 7421).